The chain runs to 457 residues: Cysteine--tRNA ligase (457 aa).

Residue Cys-28 coordinates Zn(2+). A 'HIGH' region motif is present at residues 30–40 (MTVYDYCHLGH). Positions 209, 234, and 238 each coordinate Zn(2+). A 'KMSKS' region motif is present at residues 266–270 (KMSKS). Position 269 (Lys-269) interacts with ATP.

The protein belongs to the class-I aminoacyl-tRNA synthetase family. In terms of assembly, monomer. Zn(2+) serves as cofactor.

The protein resides in the cytoplasm. The catalysed reaction is tRNA(Cys) + L-cysteine + ATP = L-cysteinyl-tRNA(Cys) + AMP + diphosphate. The polypeptide is Cysteine--tRNA ligase (Laribacter hongkongensis (strain HLHK9)).